A 379-amino-acid polypeptide reads, in one-letter code: Nitric oxide reductase FlRd-NAD(+) reductase (379 aa).

This sequence belongs to the FAD-dependent oxidoreductase family. FAD is required as a cofactor.

It is found in the cytoplasm. It carries out the reaction 2 reduced [nitric oxide reductase rubredoxin domain] + NAD(+) + H(+) = 2 oxidized [nitric oxide reductase rubredoxin domain] + NADH. It participates in nitrogen metabolism; nitric oxide reduction. One of at least two accessory proteins for anaerobic nitric oxide (NO) reductase. Reduces the rubredoxin moiety of NO reductase. This is Nitric oxide reductase FlRd-NAD(+) reductase from Pectobacterium atrosepticum (strain SCRI 1043 / ATCC BAA-672) (Erwinia carotovora subsp. atroseptica).